Here is a 147-residue protein sequence, read N- to C-terminus: Large ribosomal subunit protein uL13 (147 aa).

This sequence belongs to the universal ribosomal protein uL13 family. In terms of assembly, part of the 50S ribosomal subunit.

Its function is as follows. This protein is one of the early assembly proteins of the 50S ribosomal subunit, although it is not seen to bind rRNA by itself. It is important during the early stages of 50S assembly. The polypeptide is Large ribosomal subunit protein uL13 (Frankia casuarinae (strain DSM 45818 / CECT 9043 / HFP020203 / CcI3)).